A 219-amino-acid chain; its full sequence is GTP cyclohydrolase 1 (219 aa).

The disordered stretch occupies residues 1–37 (MDAVLKSLSVRLPDAADKRSDTGRPERVTERPTRQEA). Positions 14-37 (DAADKRSDTGRPERVTERPTRQEA) are enriched in basic and acidic residues. Residues cysteine 108, histidine 111, and cysteine 179 each contribute to the Zn(2+) site.

This sequence belongs to the GTP cyclohydrolase I family. In terms of assembly, homomer.

The catalysed reaction is GTP + H2O = 7,8-dihydroneopterin 3'-triphosphate + formate + H(+). Its pathway is cofactor biosynthesis; 7,8-dihydroneopterin triphosphate biosynthesis; 7,8-dihydroneopterin triphosphate from GTP: step 1/1. The sequence is that of GTP cyclohydrolase 1 from Methylobacterium sp. (strain 4-46).